Here is a 315-residue protein sequence, read N- to C-terminus: Ribosomal RNA small subunit methyltransferase H (315 aa).

Residues 37–39, Asp-57, Phe-83, Asp-105, and Gln-112 contribute to the S-adenosyl-L-methionine site; that span reads GGH. The disordered stretch occupies residues 296–315; that stretch reads EVKANPRSRSAVMRVAEKVR.

Belongs to the methyltransferase superfamily. RsmH family.

Its subcellular location is the cytoplasm. It catalyses the reaction cytidine(1402) in 16S rRNA + S-adenosyl-L-methionine = N(4)-methylcytidine(1402) in 16S rRNA + S-adenosyl-L-homocysteine + H(+). Functionally, specifically methylates the N4 position of cytidine in position 1402 (C1402) of 16S rRNA. The polypeptide is Ribosomal RNA small subunit methyltransferase H (Stutzerimonas stutzeri (strain A1501) (Pseudomonas stutzeri)).